The following is a 149-amino-acid chain: 3-dehydroquinate dehydratase (149 aa).

The active-site Proton acceptor is the Tyr-26. Residues Asn-77, His-83, and Asp-90 each coordinate substrate. His-103 functions as the Proton donor in the catalytic mechanism. Residues 104–105 (LS) and Arg-114 each bind substrate.

It belongs to the type-II 3-dehydroquinase family. As to quaternary structure, homododecamer.

The catalysed reaction is 3-dehydroquinate = 3-dehydroshikimate + H2O. It participates in metabolic intermediate biosynthesis; chorismate biosynthesis; chorismate from D-erythrose 4-phosphate and phosphoenolpyruvate: step 3/7. Catalyzes a trans-dehydration via an enolate intermediate. The protein is 3-dehydroquinate dehydratase of Edwardsiella ictaluri (strain 93-146).